Reading from the N-terminus, the 656-residue chain is MNAMLNIKEGEFTSTIYTLIHEHKFNDAIRILQYQHERNPKNLAALSLLAYCYYYTQDFMNAADCYSQLSYNFPQYSQYKLYHAQSLYNAFRPADALAVVSMIQDENLLNESVKLEAAIKYQEDDLVNCRILVEQLPENDAAVIINTACIDYKEGNYEEALKKFNEATEFSGYQSGLAYSIALCHYRRGDYDSALKLISEIINRGVKDHPEFNIGMVTEGIDVNFIQNTQKLHESALIEAFNLKFAIYYRTKDFKAAKESLTDMPPRNEHDADPITLHNLAISNANSDFGDSSAKLQFLLGINPFPQETFANLLFLYCKNDYFGLAADVLAENPSHTFYCLNEYQFNLLEALIYMPTNPEESLKKLEKLEKECLDRLRKTAIEIQIKKEQKTTDSDDSLEMRNLIESYDDSLEMYLPVLMTYAKYYWDKRDYQAVEKLFRNSVDYCKEHDTWKLNVAHTIFMQEKKYKDAAAFYEPIVHKKYDDGILEVPAMILANLVVCYIMTNQTDEAELILKAVENEEEAALMMKPNEKFFHNSIISLVIGSLYCSKGNFEFGISRVVKALEPPEKKLGVDTWYYAKRCIVAAIELMAKNLLVMRDSVVMEVIQFLTSCEVPGRNIYTVPDDLFEQAGESKVKCNVTYEARMIKAALLMVFND.

TPR repeat units follow at residues 9-42 (EGEF…NPKN), 43-76 (LAAL…FPQY), 141-174 (AAVI…SGYQ), 176-208 (GLAY…GVKD), 238-271 (IEAF…NEHD), 378-412 (RKTA…DDSL), 416-449 (LPVL…CKEH), 451-484 (TWKL…KYDD), and 537-570 (SIIS…PEKK).

This sequence belongs to the TTC30/dfy-1/fleer family. Component of the IFT complex B composed of at least che-2, che-13, dyf-1, dyf-3, dyf-6, dyf-11, dyf-13, ift-20, ift-74, ift-81, ifta-2, osm-1, osm-5 and osm-6. Expressed in most amphid, both phasmid and several labial-quadrant neurons.

Its subcellular location is the cell projection. The protein localises to the cilium. Plays a role in anterograde intraflagellar transport (IFT), the process by which cilia precursors are transported from the base of the cilium to the site of their incorporation at the tip. Specifically required for the kinesin osm-3 to dock onto and move the IFT particles which contain these precursors. Component of the intraflagellar transport (IFT) complex B required for transport of proteins in the motile cilium. May be required for ciliary entrance and transport of specific ciliary cargo proteins such as che-3 which are related to motility. Required for polyglutamylation of axonemal tubulin in sensory cilia. This is Tetratricopeptide repeat protein 30 homolog from Caenorhabditis elegans.